The primary structure comprises 337 residues: UDP-N-acetylenolpyruvoylglucosamine reductase (337 aa).

The FAD-binding PCMH-type domain maps to 16-187 (ALPGRAARYQ…TSVIFRLAKA (172 aa)). Residue arginine 160 is part of the active site. Serine 237 functions as the Proton donor in the catalytic mechanism. Glutamate 333 is a catalytic residue.

FAD serves as cofactor.

The protein localises to the cytoplasm. The enzyme catalyses UDP-N-acetyl-alpha-D-muramate + NADP(+) = UDP-N-acetyl-3-O-(1-carboxyvinyl)-alpha-D-glucosamine + NADPH + H(+). It functions in the pathway cell wall biogenesis; peptidoglycan biosynthesis. In terms of biological role, cell wall formation. This chain is UDP-N-acetylenolpyruvoylglucosamine reductase, found in Dechloromonas aromatica (strain RCB).